The primary structure comprises 157 residues: Polyferredoxin protein VhcB (157 aa).

3 consecutive 4Fe-4S ferredoxin-type domains span residues 23 to 52, 62 to 92, and 100 to 129; these read NGISWDREKCEYCGPCAIKCPNDAIMVVNP, KTERANEFKMCDLCGTCVSACPTEALQMGKI, and DRIEFTPSLCDSCGACVEICPQNVLKLNEE. Cys32, Cys35, Cys38, Cys42, Cys72, Cys75, Cys78, Cys82, Cys109, Cys112, Cys115, Cys119, Cys136, Cys139, Cys142, and Cys146 together coordinate [4Fe-4S] cluster.

It depends on [4Fe-4S] cluster as a cofactor.

This Methanococcus voltae protein is Polyferredoxin protein VhcB (vhcB).